Reading from the N-terminus, the 299-residue chain is Small ribosomal subunit protein uS2 (299 aa).

Residues 227 to 299 (SERKSEKSTK…DKAKASNEEE (73 aa)) are disordered.

It belongs to the universal ribosomal protein uS2 family.

This is Small ribosomal subunit protein uS2 from Christiangramia forsetii (strain DSM 17595 / CGMCC 1.15422 / KT0803) (Gramella forsetii).